The following is a 271-amino-acid chain: Hydroxyethylthiazole kinase (271 aa).

Residue methionine 46 participates in substrate binding. ATP-binding residues include arginine 122 and threonine 169. Residue glycine 196 participates in substrate binding.

It belongs to the Thz kinase family. Requires Mg(2+) as cofactor.

It catalyses the reaction 5-(2-hydroxyethyl)-4-methylthiazole + ATP = 4-methyl-5-(2-phosphooxyethyl)-thiazole + ADP + H(+). It functions in the pathway cofactor biosynthesis; thiamine diphosphate biosynthesis; 4-methyl-5-(2-phosphoethyl)-thiazole from 5-(2-hydroxyethyl)-4-methylthiazole: step 1/1. Functionally, catalyzes the phosphorylation of the hydroxyl group of 4-methyl-5-beta-hydroxyethylthiazole (THZ). The protein is Hydroxyethylthiazole kinase of Alkaliphilus oremlandii (strain OhILAs) (Clostridium oremlandii (strain OhILAs)).